The primary structure comprises 282 residues: MTSKEDGKAAPGEERRRSPLDHLPPPANSNKPLTPFSIEDILNKPSVRRSYSLCGAAHLLAAADKHAPGGLPLAGRALLSQTSPLCALEELASKTFKGLEVSVLQAAEGRDGMTIFGQRQTPKKRRKSRTAFTNHQIYELEKRFLYQKYLSPADRDQIAQQLGLTNAQVITWFQNRRAKLKRDLEEMKADVESAKKLGPSGQMDIVALAELEQNSEASGGGGGGGCGRAKSRPGSPALPPGAPQAPGGGPLQLSPASPLTDQRASSQDCSEDEEDEEIDVDD.

The segment covering 1 to 20 (MTSKEDGKAAPGEERRRSPL) has biased composition (basic and acidic residues). The disordered stretch occupies residues 1-36 (MTSKEDGKAAPGEERRRSPLDHLPPPANSNKPLTPF). Positions 125–184 (RRKSRTAFTNHQIYELEKRFLYQKYLSPADRDQIAQQLGLTNAQVITWFQNRRAKLKRDL) form a DNA-binding region, homeobox. Positions 210 to 282 (ELEQNSEASG…EEDEEIDVDD (73 aa)) are disordered. Over residues 218-227 (SGGGGGGGCG) the composition is skewed to gly residues. The segment covering 269–282 (CSEDEEDEEIDVDD) has biased composition (acidic residues).

In terms of assembly, interacts with SKOR1 which acts as a transcriptional corepressor. Expressed in the dorsal part of the spinal cord and hindbrain and in presumptive myogenic cells in lateral regions of differentiating somites.

The protein localises to the nucleus. In terms of biological role, transcription factor required for the development of GABAergic interneurons in the dorsal horn of the spinal cord and migration and further development of hypaxial muscle precursor cells for limb muscles, diaphragm and hypoglossal cord. This is Transcription factor LBX1 (Lbx1) from Mus musculus (Mouse).